The primary structure comprises 365 residues: Pyruvate dehydrogenase E1 component subunit beta, mitochondrial (365 aa).

The N-terminal 24 residues, 1–24, are a transit peptide targeting the mitochondrion; it reads MLRTRLIQAASSAQRAFSTSQKAL. E85 serves as a coordination point for thiamine diphosphate. K(+)-binding residues include I138, A186, I187, and D189.

Thiamine diphosphate is required as a cofactor. As to expression, expressed in salivary glands (at protein level).

Its subcellular location is the mitochondrion matrix. The enzyme catalyses N(6)-[(R)-lipoyl]-L-lysyl-[protein] + pyruvate + H(+) = N(6)-[(R)-S(8)-acetyldihydrolipoyl]-L-lysyl-[protein] + CO2. The pyruvate dehydrogenase complex catalyzes the overall conversion of pyruvate to acetyl-CoA and CO(2). Might play a role in regulating synapse structure formation at neuromuscular junctions. Might play a role in maintenance of mitochondrial morphology. The polypeptide is Pyruvate dehydrogenase E1 component subunit beta, mitochondrial (Drosophila melanogaster (Fruit fly)).